Reading from the N-terminus, the 199-residue chain is NAD(P)H dehydrogenase (quinone) (199 aa).

The Flavodoxin-like domain occupies 4-190; that stretch reads VLVLYYSAYG…AGARYQGKTI (187 aa). Residues 10-15 and 78-80 each bind FMN; these read SAYGHI and TRF. Tyr12 lines the NAD(+) pocket. Position 98 (Trp98) interacts with substrate. FMN contacts are provided by residues 113–119 and His134; that span reads STATQHG.

This sequence belongs to the WrbA family. FMN serves as cofactor.

It carries out the reaction a quinone + NADH + H(+) = a quinol + NAD(+). It catalyses the reaction a quinone + NADPH + H(+) = a quinol + NADP(+). In Rhodopseudomonas palustris (strain BisB5), this protein is NAD(P)H dehydrogenase (quinone).